Consider the following 155-residue polypeptide: Cyanate hydratase (155 aa).

Active-site residues include Arg95, Glu98, and Ser121.

The protein belongs to the cyanase family.

The enzyme catalyses cyanate + hydrogencarbonate + 3 H(+) = NH4(+) + 2 CO2. In terms of biological role, catalyzes the reaction of cyanate with bicarbonate to produce ammonia and carbon dioxide. This chain is Cyanate hydratase, found in Pseudomonas syringae pv. syringae (strain B728a).